The sequence spans 112 residues: Transcriptional regulator WhiD (112 aa).

The 4Fe-4S Wbl-type domain occupies 22–86 (ACRGVDSSLF…GGLTEDEREE (65 aa)). Positions 23, 53, 56, and 62 each coordinate [4Fe-4S] cluster.

This sequence belongs to the WhiB family. The 4Fe-4S form is a monomer; upon oxidation forms a disulfide-bonded homodimer. The cofactor is [4Fe-4S] cluster. Can be nitrosylated by NO, 8 NO react per cluster. These complexes are quite stable under anaerobic conditions, but degrade slowly aerobically. Post-translationally, upon Fe-S cluster removal intramolecular disulfide bonds are formed.

The protein resides in the cytoplasm. Functionally, acts as a transcriptional regulator. Probably redox-responsive. The apo- but not holo-form probably binds DNA. Plays a positive role in prespore maturation and the initiation of sporulation septation. The protein is Transcriptional regulator WhiD (whiD) of Streptomyces coelicolor (strain ATCC BAA-471 / A3(2) / M145).